A 474-amino-acid chain; its full sequence is MSTEIKTQVVVLGAGPAGYSAAFRCADLGLETVIVERYNTLGGVCLNVGCIPSKALLHVAKVIEEAKALAEHGIVFGEPKTDIDKIRTWKEKVINQLTGGLAGMAKGRKVKVVNGLGKFTGANTLEVEGENGKTVINFDNAIIAAGSRPIQLPFIPHEDPRIWDSTDALELKEVPERLLVMGGGIIGLEMGTVYHALGSQIDVVEMFDQVIPAADKDIVKVFTKRISKKFNLMLETKVTAVEAKEDGIYVTMEGKKAPAEPQRYDAVLVAIGRVPNGKNLDAGKAGVEVDDRGFIRVDKQLRTNVPHIFAIGDIVGQPMLAHKGVHEGHVAAEVIAGKKHYFDPKVIPSIAYTEPEVAWVGLTEKEAKEKGISYETATFPWAASGRAIASDCADGMTKLIFDKESHRVIGGAIVGTNGGELLGEIGLAIEMGCDAEDIALTIHAHPTLHESVGLAAEVFEGSITDLPNPKAKKK.

FAD is bound by residues 36 to 45, K54, and G117; that span reads ERYNTLGGVC. A disulfide bridge connects residues C45 and C50. NAD(+)-binding positions include 182–186 and E205; that span reads GGGII. The residue at position 220 (K220) is an N6-acetyllysine. NAD(+) contacts are provided by residues V238 and 270–273; that span reads AIGR. The FAD site is built by D313 and A321. Catalysis depends on H445, which acts as the Proton acceptor.

This sequence belongs to the class-I pyridine nucleotide-disulfide oxidoreductase family. Homodimer. The cofactor is FAD.

The protein resides in the cytoplasm. It carries out the reaction N(6)-[(R)-dihydrolipoyl]-L-lysyl-[protein] + NAD(+) = N(6)-[(R)-lipoyl]-L-lysyl-[protein] + NADH + H(+). Functionally, lipoamide dehydrogenase is a component of the glycine cleavage system as well as of the alpha-ketoacid dehydrogenase complexes. This Shigella flexneri protein is Dihydrolipoyl dehydrogenase (lpdA).